Consider the following 554-residue polypeptide: MPTVDDVLEQVGEFGWFQKRTFLFLCLISAILAPIYLGIVFLGFTPDHRCRSPGVDELSQRCGWSPEEELNYTVPGLGATDGAFVRQCMRYEVDWNQSSLGCVDPLASLAPNRSHLPLGPCQHGWVYDTPGSSIVTEFNLVCADAWKVDLFQSCVNLGFFLGSLGVGYIADRFGRKLCLLLTTLINAVSGVLTAVAPDYTSMLLFRLLQGLVSKGSWMSGYTLITEFVGSGYRRTVAILYQVAFSVGLVALSGVAYAIPNWRWLQLTVSLPTFLCLFYYWCVPESPRWLLSQKRNTDAVKIMDNIAQKNGKLPPADLKMLSLDEDVTEKLSPSLADLFRTPNLRKHTFILMFLWFTCSVLYQGLILHMGATGGNVYLDFFYSSLVEFPAAFVILVTIDRVGRIYPMAASNLAAGVASVILIFVPQDLHWLTIVLSCVGRMGATIVLQMICLVNAELYPTFVRNLGVMVCSALCDVGGIITPFMVFRLMEVWQPLPLIVFGVLGLLAGGMTLLLPETKGVALPETIEDAENLRRKAKPKESKIYLQVQTSELKGP.

At 1–21 (MPTVDDVLEQVGEFGWFQKRT) the chain is on the cytoplasmic side. Residues 22-42 (FLFLCLISAILAPIYLGIVFL) form a helical membrane-spanning segment. Over 43–149 (GFTPDHRCRS…LVCADAWKVD (107 aa)) the chain is Extracellular. Asparagine 71 carries an N-linked (GlcNAc...) asparagine glycan. A helical transmembrane segment spans residues 150–170 (LFQSCVNLGFFLGSLGVGYIA). Over 171–176 (DRFGRK) the chain is Cytoplasmic. The chain crosses the membrane as a helical span at residues 177–197 (LCLLLTTLINAVSGVLTAVAP). The Extracellular segment spans residues 198–206 (DYTSMLLFR). Residues 207–229 (LLQGLVSKGSWMSGYTLITEFVG) form a helical membrane-spanning segment. The Cytoplasmic segment spans residues 230 to 237 (SGYRRTVA). Residues 238–258 (ILYQVAFSVGLVALSGVAYAI) traverse the membrane as a helical segment. Residues 259-262 (PNWR) lie on the Extracellular side of the membrane. A helical transmembrane segment spans residues 263 to 283 (WLQLTVSLPTFLCLFYYWCVP). Positions 283–287 (PESPR) match the Proline-rich sequence motif. The Cytoplasmic portion of the chain corresponds to 284 to 347 (ESPRWLLSQK…FRTPNLRKHT (64 aa)). Position 333 is a phosphoserine (serine 333). The chain crosses the membrane as a helical span at residues 348–368 (FILMFLWFTCSVLYQGLILHM). Residues 369–374 (GATGGN) lie on the Extracellular side of the membrane. The helical transmembrane segment at 375–395 (VYLDFFYSSLVEFPAAFVILV) threads the bilayer. Residues 396-402 (TIDRVGR) are Cytoplasmic-facing. The chain crosses the membrane as a helical span at residues 403-423 (IYPMAASNLAAGVASVILIFV). Residues 424–431 (PQDLHWLT) are Extracellular-facing. Residues 432-452 (IVLSCVGRMGATIVLQMICLV) form a helical membrane-spanning segment. The Cytoplasmic segment spans residues 453–464 (NAELYPTFVRNL). The helical transmembrane segment at 465-485 (GVMVCSALCDVGGIITPFMVF) threads the bilayer. At 486–492 (RLMEVWQ) the chain is on the extracellular side. A helical transmembrane segment spans residues 493-513 (PLPLIVFGVLGLLAGGMTLLL). Topologically, residues 514–554 (PETKGVALPETIEDAENLRRKAKPKESKIYLQVQTSELKGP) are cytoplasmic.

Belongs to the major facilitator (TC 2.A.1) superfamily. Organic cation transporter (TC 2.A.1.19) family. Phosphorylated. Expressed in kidney, liver and intestine.

The protein resides in the basolateral cell membrane. Its subcellular location is the apical cell membrane. It is found in the lateral cell membrane. It localises to the basal cell membrane. The catalysed reaction is 1-methylnicotinamide(out) = 1-methylnicotinamide(in). It catalyses the reaction dopamine(out) = dopamine(in). It carries out the reaction serotonin(out) = serotonin(in). The enzyme catalyses (R)-adrenaline(out) = (R)-adrenaline(in). The catalysed reaction is (R)-noradrenaline(out) = (R)-noradrenaline(in). It catalyses the reaction histamine(out) = histamine(in). It carries out the reaction guanidine(out) = guanidine(in). The enzyme catalyses choline(out) = choline(in). The catalysed reaction is acetylcholine(in) = acetylcholine(out). It catalyses the reaction thiamine(in) = thiamine(out). It carries out the reaction spermidine(in) = spermidine(out). The enzyme catalyses agmatine(out) = agmatine(in). The catalysed reaction is putrescine(out) = putrescine(in). It catalyses the reaction (R)-carnitine(in) = (R)-carnitine(out). It carries out the reaction O-isobutanoyl-(R)-carnitine(in) = O-isobutanoyl-(R)-carnitine(out). The enzyme catalyses O-acetyl-(R)-carnitine(in) = O-acetyl-(R)-carnitine(out). The catalysed reaction is O-3-hydroxybutanoyl-(R)-carnitine(in) = O-3-hydroxybutanoyl-(R)-carnitine(out). It catalyses the reaction O-propanoyl-(R)-carnitine(in) = O-propanoyl-(R)-carnitine(out). It carries out the reaction O-butanoyl-(R)-carnitine(in) = O-butanoyl-(R)-carnitine(out). The enzyme catalyses O-2-methylbutanoyl-(R)-carnitine(in) = O-2-methylbutanoyl-(R)-carnitine(out). The catalysed reaction is O-3-methylbutanoyl-(R)-carnitine(in) = O-3-methylbutanoyl-(R)-carnitine(out). It catalyses the reaction O-hexanoyl-(R)-carnitine(in) = O-hexanoyl-(R)-carnitine(out). It carries out the reaction L-histidyl-L-proline diketopiperazine(in) = L-histidyl-L-proline diketopiperazine(out). The enzyme catalyses (R)-salsolinol(in) = (R)-salsolinol(out). The catalysed reaction is prostaglandin F2alpha(out) = prostaglandin F2alpha(in). It catalyses the reaction prostaglandin E2(out) = prostaglandin E2(in). Its activity is regulated as follows. Phosphorylation of the transporter leads to changes in its substrate affinity, resulting in a regulation of the transport activity. In contrast with rat ortholog, ASP uptake is inhibited by protein kinase A (PKA) and C (PKC) activation. ASP uptake is also endogenously activated by calmodulin, the calmodulin-dependent kinase II and LCK tyrosine kinase. Inhibited by cGMP, most likely through a cGMP-binding protein that interacts with OCT1. In terms of biological role, electrogenic voltage-dependent transporter that mediates the transport of a variety of organic cations such as endogenous bioactive amines, cationic drugs and xenobiotics. Functions as a pH- and Na(+)-independent, bidirectional transporter. Cation cellular uptake or release is driven by the electrochemical potential (i.e. membrane potential and concentration gradient) and substrate selectivity. Hydrophobicity is a major requirement for recognition in polyvalent substrates and inhibitors. Primarily expressed in the basolateral membrane of hepatocytes and proximal tubules and involved in the uptake and disposition of cationic compounds from the blood by hepatic and renal clearance. Most likely functions as an uptake carrier in enterocytes contributing to the intestinal elimination of organic cations from the systemic circulation. Transports endogenous monoamines such as N-1-methylnicotinamide (NMN), guanidine, neurotransmitters dopamine, serotonin, noradrenaline, adrenaline and histamine, and quaternary ammonium compound such as choline. Also transports natural polyamines such as spermidine, agmatine and putrescine at low affinity, but relatively high turnover. Involved in the hepatic and intestinal uptake of the vitamin B1/thiamine, hence regulating hepatic lipid and energy metabolism. Contributes to the influx and efflux of fatty acid carriers carnitines and acylcarnitines across the basolateral membrane of hepatocytes, from the liver to the systemic circulation and inversely and may be involved in regulating the systemic availability of hepatic acylcarnitines. Also capable of transporting non-amine endogenous compounds such as prostaglandin E2 (PGE2) and prostaglandin F2-alpha (PGF2-alpha). May contribute to the transport of cationic compounds in testes across the blood-testis-barrier. Also mediates the uptake of xenobiotics tributylmethylammonium (TBuMA), quinidine, N-methyl-quinine (NMQ), N-methyl-quinidine (NMQD) N-(4,4-azo-n-pentyl)-quinuclidine (APQ), azidoprocainamide methoiodide (AMP), N-(4,4-azo-n-pentyl)-21-deoxyajmalinium (APDA) and 4-(4-(dimethylamino)styryl)-N-methylpyridinium (ASP). The chain is Solute carrier family 22 member 1 (SLC22A1) from Oryctolagus cuniculus (Rabbit).